The following is a 77-amino-acid chain: uncharacterized protein (77 aa).

The Peptidase A1 domain maps to 1 to 77; sequence MAFERQGKIE…VAILDGKLVW (77 aa).

This is an uncharacterized protein from Saccharomyces cerevisiae (strain ATCC 204508 / S288c) (Baker's yeast).